The primary structure comprises 54 residues: Large ribosomal subunit protein bL33A (54 aa).

The protein belongs to the bacterial ribosomal protein bL33 family.

The protein is Large ribosomal subunit protein bL33A of Mycobacterium marinum (strain ATCC BAA-535 / M).